The following is an 87-amino-acid chain: Defensin-like protein 175 (87 aa).

The signal sequence occupies residues 1–23; the sequence is MAKATSSLVVPIIFLVIFALVEQ. Disulfide bonds link Cys27–Cys66, Cys36–Cys55, Cys39–Cys60, and Cys43–Cys62.

It belongs to the DEFL family.

The protein localises to the secreted. This is Defensin-like protein 175 from Arabidopsis thaliana (Mouse-ear cress).